The primary structure comprises 396 residues: MAKGKFERTKPHVNVGTIGHVDHGKTTLTAAITTVLTKKFGGEAKDYSQIDNAPEEKARGITINTSHVEYETETRHYAHVDCPGHADYVKNMITGAAQMDGAILVVSAADGPMPQTREHILLARQVGVPYIIVFLNKADMVDDAELLELVEMEVRELLSKYDFPGDDTPIIKGSAKLALEGDQSDIGEPAIFRLAEALDTYIPTPERAVDGTFLMPVEDVFSISGRGTVVTGRVERGIVKVGDEIEIVGLKPTIKTTCTGVEMFRKLLDQGQAGDNVGVLLRGTKREEVERGQVLAKVGSIKPHTKFTAEIYVLGKDEGGRHTPFFNGYRPQFYFRTTDVTGAVELPAGTEMVMPGDNVSISVSLIAPIAMEEGLRFAIREGGRTVGAGVVAKIIE.

In terms of domain architecture, tr-type G spans 10–206 (KPHVNVGTIG…ALDTYIPTPE (197 aa)). Residues 19–26 (GHVDHGKT) form a G1 region. 19–26 (GHVDHGKT) serves as a coordination point for GTP. Threonine 26 serves as a coordination point for Mg(2+). A G2 region spans residues 60-64 (GITIN). Positions 81–84 (DCPG) are G3. GTP-binding positions include 81–85 (DCPGH) and 136–139 (NKAD). The G4 stretch occupies residues 136–139 (NKAD). Residues 174 to 176 (SAK) form a G5 region.

It belongs to the TRAFAC class translation factor GTPase superfamily. Classic translation factor GTPase family. EF-Tu/EF-1A subfamily. In terms of assembly, monomer.

The protein localises to the cytoplasm. The enzyme catalyses GTP + H2O = GDP + phosphate + H(+). Functionally, GTP hydrolase that promotes the GTP-dependent binding of aminoacyl-tRNA to the A-site of ribosomes during protein biosynthesis. This chain is Elongation factor Tu 1, found in Methylobacillus flagellatus (strain ATCC 51484 / DSM 6875 / VKM B-1610 / KT).